Reading from the N-terminus, the 401-residue chain is Jumonji C domain-containing protein 5 (401 aa).

The region spanning 255-401 (EYLAQHELFA…PSFSVSFWWE (147 aa)) is the JmjC domain. The Fe cation site is built by His306, Asp308, and His385.

It depends on Fe(2+) as a cofactor. In terms of tissue distribution, expressed in neurons close to the dorsal lateral neurons involved in circadian rhythm.

The protein resides in the nucleus. The protein localises to the nucleoplasm. It localises to the cytoplasm. It catalyses the reaction L-arginyl-[protein] + 2-oxoglutarate + O2 = (3R)-3-hydroxy-L-arginyl-[protein] + succinate + CO2. Functionally, bifunctional enzyme that acts both as an endopeptidase and 2-oxoglutarate-dependent monooxygenase. May be involved in regulation of behavior and circadian rhythms. This is Jumonji C domain-containing protein 5 from Drosophila melanogaster (Fruit fly).